The chain runs to 243 residues: Ribosomal RNA small subunit methyltransferase J (243 aa).

S-adenosyl-L-methionine contacts are provided by residues 112–113 (ER) and Asp-164.

It belongs to the methyltransferase superfamily. RsmJ family.

It is found in the cytoplasm. The enzyme catalyses guanosine(1516) in 16S rRNA + S-adenosyl-L-methionine = N(2)-methylguanosine(1516) in 16S rRNA + S-adenosyl-L-homocysteine + H(+). Its function is as follows. Specifically methylates the guanosine in position 1516 of 16S rRNA. The protein is Ribosomal RNA small subunit methyltransferase J of Legionella pneumophila (strain Lens).